The primary structure comprises 695 residues: Segment polarity protein dishevelled homolog DVL-1 (695 aa).

Positions 1–85 constitute a DIX domain; sequence MAETKIIYHM…RVVSWLVLAE (85 aa). Residues 89–236 form a disordered region; the sequence is SDAGSQGTDS…RLRQTDRASS (148 aa). Residues 142–151 are compositionally biased toward basic residues; sequence SHRRERARRR. Residues 152–171 are compositionally biased toward basic and acidic residues; sequence NRDEAARTNGHPRGDRRREL. The span at 177 to 192 shows a compositional bias: low complexity; the sequence is SASTVLSSELESSSFI. Position 194 is a phosphoserine (Ser-194). Residues 201 to 214 are compositionally biased toward low complexity; the sequence is SRLSSSTEQSTSSR. Over residues 215–228 the composition is skewed to basic residues; sequence LIRKHKCRRRKQRL. A PDZ domain is found at 251 to 323; that stretch reads TVTLNMERHH…NDDAVRVLRE (73 aa). One can recognise a DEP domain in the interval 425-499; the sequence is PDSGLEIRDR…SEQCYYVFGD (75 aa). The span at 551 to 580 shows a compositional bias: low complexity; it reads PAYQDPGFSYGSGSAGSQQSEGSKSSGSTR. Residues 551-641 are disordered; it reads PAYQDPGFSY…SQASAVAPGL (91 aa). The segment covering 622–635 has biased composition (polar residues); it reads SQLSRGSSPRSQAS.

Belongs to the DSH family. Interacts with BRD7 and INVS. Interacts (via PDZ domain) with the VANGL1 and VANGL2 (via C-terminus). Interacts (via PDZ domain) with NXN. Interacts with CXXC4. Interacts with ARRB1; the interaction is enhanced by phosphorylation of DVL1. Interacts with CYLD. Interacts (via PDZ domain) with RYK. Self-associates (via DIX domain) and forms higher homooligomers. Interacts (via PDZ domain) with DACT1 and FZD7, where DACT1 and FZD7 compete for the same binding site. Interacts (via DEP domain) with MUSK; the interaction is direct and mediates the formation a DVL1, MUSK and PAK1 ternary complex involved in AChR clustering. Interacts (via PDZ domain) with TMEM88. Interacts with DCDC2. Interacts with FOXK2. Interacts with PKD1 (via extracellular domain). Interacts (via PDZ domain) with CCDC88C/DAPLE; competes with CCDC88C for binding to frizzled receptor FZD7 and dissociates from CCDC88C following initiation of non-canonical Wnt signaling when CCDC88C displaces DVL1 from ligand-activated FZD7. Post-translationally, ubiquitinated; undergoes both 'Lys-48'-linked ubiquitination, leading to its subsequent degradation by the ubiquitin-proteasome pathway, and 'Lys-63'-linked ubiquitination. The interaction with INVS is required for ubiquitination. Deubiquitinated by CYLD, which acts on 'Lys-63'-linked ubiquitin chains.

The protein resides in the cell membrane. The protein localises to the cytoplasm. It is found in the cytosol. It localises to the cytoplasmic vesicle. Participates in Wnt signaling by binding to the cytoplasmic C-terminus of frizzled family members and transducing the Wnt signal to down-stream effectors. Plays a role both in canonical and non-canonical Wnt signaling. Plays a role in the signal transduction pathways mediated by multiple Wnt genes. Required for LEF1 activation upon WNT1 and WNT3A signaling. DVL1 and PAK1 form a ternary complex with MUSK which is important for MUSK-dependent regulation of AChR clustering during the formation of the neuromuscular junction (NMJ). This chain is Segment polarity protein dishevelled homolog DVL-1 (Dvl1), found in Rattus norvegicus (Rat).